Consider the following 243-residue polypeptide: Probable 2-phosphosulfolactate phosphatase (243 aa).

Belongs to the ComB family. Requires Mg(2+) as cofactor.

It carries out the reaction (2R)-O-phospho-3-sulfolactate + H2O = (2R)-3-sulfolactate + phosphate. This Prochlorococcus marinus (strain MIT 9303) protein is Probable 2-phosphosulfolactate phosphatase.